Here is a 410-residue protein sequence, read N- to C-terminus: Lipoyl synthase, mitochondrial (410 aa).

Residues Cys-134, Cys-139, Cys-145, Cys-165, Cys-169, Cys-172, and Ser-390 each contribute to the [4Fe-4S] cluster site. In terms of domain architecture, Radical SAM core spans 148–379 (AGKSTAATAT…AKIGNDLGFL (232 aa)).

It belongs to the radical SAM superfamily. Lipoyl synthase family. Requires [4Fe-4S] cluster as cofactor.

It is found in the mitochondrion. The enzyme catalyses [[Fe-S] cluster scaffold protein carrying a second [4Fe-4S](2+) cluster] + N(6)-octanoyl-L-lysyl-[protein] + 2 oxidized [2Fe-2S]-[ferredoxin] + 2 S-adenosyl-L-methionine + 4 H(+) = [[Fe-S] cluster scaffold protein] + N(6)-[(R)-dihydrolipoyl]-L-lysyl-[protein] + 4 Fe(3+) + 2 hydrogen sulfide + 2 5'-deoxyadenosine + 2 L-methionine + 2 reduced [2Fe-2S]-[ferredoxin]. It functions in the pathway protein modification; protein lipoylation via endogenous pathway; protein N(6)-(lipoyl)lysine from octanoyl-[acyl-carrier-protein]: step 2/2. Its function is as follows. Catalyzes the radical-mediated insertion of two sulfur atoms into the C-6 and C-8 positions of the octanoyl moiety bound to the lipoyl domains of lipoate-dependent enzymes, thereby converting the octanoylated domains into lipoylated derivatives. The polypeptide is Lipoyl synthase, mitochondrial (Schistosoma mansoni (Blood fluke)).